The following is a 172-amino-acid chain: Zinc finger protein 580 (172 aa).

Residues 1-93 form a disordered region; the sequence is MLLLPPRPPH…GEPGPRKGYS (93 aa). Positions 19–30 are enriched in pro residues; it reads MDPPPPKAPPFP. Lys31 is covalently cross-linked (Glycyl lysine isopeptide (Lys-Gly) (interchain with G-Cter in SUMO2)). Residues 31 to 44 are compositionally biased toward low complexity; the sequence is KAEGPSSTPSSAAG. Over residues 75-86 the composition is skewed to pro residues; that stretch reads GPPQREAPPGEP. The segment at 92 to 114 adopts a C2H2-type 1 zinc-finger fold; it reads YSCPECARVFASPLRLQSHRVSH. Residue Lys118 forms a Glycyl lysine isopeptide (Lys-Gly) (interchain with G-Cter in SUMO2) linkage. C2H2-type zinc fingers lie at residues 120-142 and 150-172; these read FTCGACGKAFKRSSHLSRHRATH and HTCPLCPRRFQDAAELAQHVRLH.

Interacts with SMAD2. In terms of tissue distribution, expressed in endothelial cells.

The protein localises to the nucleus. Functionally, involved in the regulation of endothelial cell proliferation and migration. Mediates H(2)O(2)-induced leukocyte chemotaxis by elevating interleukin-8 production and may play a role in inflammation. May be involved in transcriptional regulation. This is Zinc finger protein 580 (ZNF580) from Homo sapiens (Human).